The following is a 639-amino-acid chain: MAANEKTYLSETAKVDQSSVQPFPNSSKIYVEGSRSDIRVPMREISLADTPTDFGGEQNRPVRVYDTSGPYTDPEVQIDLRTGLPDVRSRWINERGDTEALAEKSSLFATQRLNDPALASLRFQHLRTPRRAKSGANVSQMHYARQGIITPEMEYIAIRENMSLQQAREQGVLQEQHAGQAFGAAIPDEITPEFVRSEVARGRAIIPANINHPELEPMIIGRNFLVKINGNIGNSALGSSIEEEVAKLTWGTRWGADTIMDLSTGKNIHETREWIIRNASVPIGTVPIYQALEKVDGIAEDLTWDIFRDTLIEQAEQGVDYFTIHAGVLLRYVPLTAKRVTGIVSRGGSIMAKWCLAHHQENFLYTHFEDICEIMKAYDVSFSLGDGLRPGSIADANDEAQFGELETLGELTKIAWQHDVQTMIEGPGHVPMQMIKENMDKQLRECGEAPFYTLGPLTTDIAPGYDHITSGIGAAMIGWYGCAMLCYVTPKEHLGLPNKDDVKEGIITYKIAAHAADLAKGHPGAQIRDNALSKARFEFRWEDQFNLGLDPDTARAYHDETLPKESAKVAHFCSMCGPKFCSMKITQEVRDYAAEHGTEITPRAPGEAEEVVRMVDVEAEMQKKSDEFRAQGSEIYSKV.

The interval 49-71 (DTPTDFGGEQNRPVRVYDTSGPY) is disordered. Substrate is bound by residues Asn231, Met260, Tyr289, His325, 345-347 (SRG), 386-389 (DGLR), and Glu425. Residue His429 participates in Zn(2+) binding. A substrate-binding site is contributed by Tyr452. His493 lines the Zn(2+) pocket. Cys573, Cys576, and Cys581 together coordinate [4Fe-4S] cluster.

It belongs to the ThiC family. As to quaternary structure, homodimer. Requires [4Fe-4S] cluster as cofactor.

It catalyses the reaction 5-amino-1-(5-phospho-beta-D-ribosyl)imidazole + S-adenosyl-L-methionine = 4-amino-2-methyl-5-(phosphooxymethyl)pyrimidine + CO + 5'-deoxyadenosine + formate + L-methionine + 3 H(+). It functions in the pathway cofactor biosynthesis; thiamine diphosphate biosynthesis. Catalyzes the synthesis of the hydroxymethylpyrimidine phosphate (HMP-P) moiety of thiamine from aminoimidazole ribotide (AIR) in a radical S-adenosyl-L-methionine (SAM)-dependent reaction. This chain is Phosphomethylpyrimidine synthase, found in Teredinibacter turnerae (strain ATCC 39867 / T7901).